Consider the following 301-residue polypeptide: Ribonuclease HIII (301 aa).

One can recognise an RNase H type-2 domain in the interval 90-301 (TPHIGIDESG…LDAILGKVGK (212 aa)). A divalent metal cation contacts are provided by aspartate 96, glutamate 97, and aspartate 198.

It belongs to the RNase HII family. RnhC subfamily. The cofactor is Mn(2+). Mg(2+) serves as cofactor.

The protein resides in the cytoplasm. The enzyme catalyses Endonucleolytic cleavage to 5'-phosphomonoester.. Its function is as follows. Endonuclease that specifically degrades the RNA of RNA-DNA hybrids. The polypeptide is Ribonuclease HIII (Protochlamydia amoebophila (strain UWE25)).